A 288-amino-acid chain; its full sequence is Phosphatidylglycerol--prolipoprotein diacylglyceryl transferase (288 aa).

4 helical membrane-spanning segments follow: residues 8–28 (IGPIELHYYGLMYAIAFFVGI), 49–69 (AFVAIISGLIGGRLYYILFNL), 79–99 (ILAVWHGGMAIHGGILGGIAG), and 109–129 (INPLILGDFAAGPFILGQAIG). R130 is an a 1,2-diacyl-sn-glycero-3-phospho-(1'-sn-glycerol) binding site. 3 helical membrane-spanning segments follow: residues 203-223 (PAMLYELILNLIGFFIIWFIL), 232-252 (GYMWWWYIIIYSINRIIVSFF), and 259-279 (FFNFRAPHVISIILIAVSIFF).

This sequence belongs to the Lgt family.

It localises to the cell inner membrane. It carries out the reaction L-cysteinyl-[prolipoprotein] + a 1,2-diacyl-sn-glycero-3-phospho-(1'-sn-glycerol) = an S-1,2-diacyl-sn-glyceryl-L-cysteinyl-[prolipoprotein] + sn-glycerol 1-phosphate + H(+). It functions in the pathway protein modification; lipoprotein biosynthesis (diacylglyceryl transfer). Functionally, catalyzes the transfer of the diacylglyceryl group from phosphatidylglycerol to the sulfhydryl group of the N-terminal cysteine of a prolipoprotein, the first step in the formation of mature lipoproteins. The protein is Phosphatidylglycerol--prolipoprotein diacylglyceryl transferase of Fusobacterium nucleatum subsp. nucleatum (strain ATCC 25586 / DSM 15643 / BCRC 10681 / CIP 101130 / JCM 8532 / KCTC 2640 / LMG 13131 / VPI 4355).